The chain runs to 140 residues: Large ribosomal subunit protein bL17 (140 aa).

Belongs to the bacterial ribosomal protein bL17 family. In terms of assembly, part of the 50S ribosomal subunit. Contacts protein L32.

The polypeptide is Large ribosomal subunit protein bL17 (Rhizobium leguminosarum bv. trifolii (strain WSM2304)).